The sequence spans 455 residues: Adenylyltransferase and sulfurtransferase UBA4 (455 aa).

ATP-binding positions include glycine 93, aspartate 114, 121 to 125 (SNLHR), lysine 138, and 182 to 183 (DH). Residues cysteine 224 and cysteine 227 each contribute to the Zn(2+) site. Catalysis depends on cysteine 241, which acts as the Glycyl thioester intermediate; for adenylyltransferase activity. 2 residues coordinate Zn(2+): cysteine 302 and cysteine 305. A Rhodanese domain is found at 355–453 (QSREHTLIDV…WSEDIDAAFP (99 aa)). The Cysteine persulfide intermediate; for sulfurtransferase activity role is filled by cysteine 413.

This sequence in the N-terminal section; belongs to the HesA/MoeB/ThiF family. UBA4 subfamily. Requires Zn(2+) as cofactor.

It localises to the cytoplasm. The protein resides in the cytosol. It participates in tRNA modification; 5-methoxycarbonylmethyl-2-thiouridine-tRNA biosynthesis. Its function is as follows. Plays a central role in 2-thiolation of mcm(5)S(2)U at tRNA wobble positions of cytosolic tRNA(Lys), tRNA(Glu) and tRNA(Gln). Acts by mediating the C-terminal thiocarboxylation of sulfur carrier URM1. Its N-terminus first activates URM1 as acyl-adenylate (-COAMP), then the persulfide sulfur on the catalytic cysteine is transferred to URM1 to form thiocarboxylation (-COSH) of its C-terminus. The reaction probably involves hydrogen sulfide that is generated from the persulfide intermediate and that acts as a nucleophile towards URM1. Subsequently, a transient disulfide bond is formed. Does not use thiosulfate as sulfur donor; NFS1 probably acting as a sulfur donor for thiocarboxylation reactions. Prior mcm(5) tRNA modification by the elongator complex is required for 2-thiolation. May also be involved in protein urmylation. The chain is Adenylyltransferase and sulfurtransferase UBA4 from Lodderomyces elongisporus (strain ATCC 11503 / CBS 2605 / JCM 1781 / NBRC 1676 / NRRL YB-4239) (Yeast).